Consider the following 283-residue polypeptide: MKHSFSRFFGFGEKEEEPEIAEHDTNKEEILEIPVHAIVPNRFQPRTIFSDEKIKELAMTIHTHGIIQPIVVRHTEDEGQYELIAGERRWRAVQTLEWEKIPAIIKDFSDTETASVALIENLQREELSSIEEAHAYARLLELHDLTQEALAQRLGKGQSTIANKLRLLKLPEPVQDAIMEKKITERHARALIPLKQPEFQVTLLAEIIEKSLNVKQTEDRVVKMLEQNKQKPKPRRKAFSRDTRIAMNTIRQSLSMVEDSGVRLNTEEEEFEEYIQLTIRIPK.

The interval 1–21 (MKHSFSRFFGFGEKEEEPEIA) is disordered. The segment at residues 148–167 (EALAQRLGKGQSTIANKLRL) is a DNA-binding region (H-T-H motif).

It belongs to the ParB family.

It localises to the cytoplasm. The protein resides in the nucleoid. Functionally, effects nucleoid occlusion by binding relatively nonspecifically to DNA and preventing the assembly of the division machinery in the vicinity of the nucleoid, especially under conditions that disturb the cell cycle. It helps to coordinate cell division and chromosome segregation by preventing the formation of the Z ring through the nucleoid, which would cause chromosome breakage. The sequence is that of Nucleoid occlusion protein from Bacillus velezensis (strain DSM 23117 / BGSC 10A6 / LMG 26770 / FZB42) (Bacillus amyloliquefaciens subsp. plantarum).